Consider the following 388-residue polypeptide: Succinate--CoA ligase [ADP-forming] subunit beta (388 aa).

The ATP-grasp domain occupies Lys-9–Glu-244. ATP contacts are provided by residues Lys-46, Gly-53–Gly-55, Glu-99, Ala-102, and Glu-107. Residues Asn-199 and Asp-213 each coordinate Mg(2+). Residues Asn-264 and Gly-321 to Met-323 each bind substrate.

This sequence belongs to the succinate/malate CoA ligase beta subunit family. As to quaternary structure, heterotetramer of two alpha and two beta subunits. Requires Mg(2+) as cofactor.

The catalysed reaction is succinate + ATP + CoA = succinyl-CoA + ADP + phosphate. The enzyme catalyses GTP + succinate + CoA = succinyl-CoA + GDP + phosphate. It functions in the pathway carbohydrate metabolism; tricarboxylic acid cycle; succinate from succinyl-CoA (ligase route): step 1/1. Functionally, succinyl-CoA synthetase functions in the citric acid cycle (TCA), coupling the hydrolysis of succinyl-CoA to the synthesis of either ATP or GTP and thus represents the only step of substrate-level phosphorylation in the TCA. The beta subunit provides nucleotide specificity of the enzyme and binds the substrate succinate, while the binding sites for coenzyme A and phosphate are found in the alpha subunit. The chain is Succinate--CoA ligase [ADP-forming] subunit beta from Burkholderia multivorans (strain ATCC 17616 / 249).